Reading from the N-terminus, the 312-residue chain is Putative endonuclease 4 (312 aa).

His-84, His-127, Glu-166, Asp-202, His-205, His-239, Asp-252, His-254, and Glu-284 together coordinate Zn(2+).

Belongs to the AP endonuclease 2 family. Zn(2+) is required as a cofactor.

It carries out the reaction Endonucleolytic cleavage to 5'-phosphooligonucleotide end-products.. Endonuclease IV plays a role in DNA repair. It cleaves phosphodiester bonds at apurinic or apyrimidinic sites (AP sites) to produce new 5'-ends that are base-free deoxyribose 5-phosphate residues. This chain is Putative endonuclease 4, found in Acanthamoeba polyphaga (Amoeba).